A 347-amino-acid polypeptide reads, in one-letter code: GMP reductase (347 aa).

NADP(+) is bound at residue 108–131 (ADFEKTVQILALNPALNFVCIDVA). Residues Gly181 and Gly183 each contribute to the K(+) site. Residue Cys186 is the Thioimidate intermediate of the active site. NADP(+) is bound at residue 216–239 (IVSDGGCTMPGDVAKAFGGGADFV).

The protein belongs to the IMPDH/GMPR family. GuaC type 1 subfamily. In terms of assembly, homotetramer.

It carries out the reaction IMP + NH4(+) + NADP(+) = GMP + NADPH + 2 H(+). In terms of biological role, catalyzes the irreversible NADPH-dependent deamination of GMP to IMP. It functions in the conversion of nucleobase, nucleoside and nucleotide derivatives of G to A nucleotides, and in maintaining the intracellular balance of A and G nucleotides. The sequence is that of GMP reductase from Salmonella paratyphi C (strain RKS4594).